The sequence spans 232 residues: Large ribosomal subunit protein uL1 (232 aa).

Belongs to the universal ribosomal protein uL1 family. As to quaternary structure, part of the 50S ribosomal subunit.

Its function is as follows. Binds directly to 23S rRNA. The L1 stalk is quite mobile in the ribosome, and is involved in E site tRNA release. Functionally, protein L1 is also a translational repressor protein, it controls the translation of the L11 operon by binding to its mRNA. This is Large ribosomal subunit protein uL1 from Burkholderia lata (strain ATCC 17760 / DSM 23089 / LMG 22485 / NCIMB 9086 / R18194 / 383).